The following is an 88-amino-acid chain: Small ribosomal subunit protein uS17 (88 aa).

This sequence belongs to the universal ribosomal protein uS17 family. Part of the 30S ribosomal subunit.

In terms of biological role, one of the primary rRNA binding proteins, it binds specifically to the 5'-end of 16S ribosomal RNA. The protein is Small ribosomal subunit protein uS17 of Azotobacter vinelandii (strain DJ / ATCC BAA-1303).